A 422-amino-acid chain; its full sequence is Serine--tRNA ligase (422 aa).

230-232 serves as a coordination point for L-serine; that stretch reads TAE. 261-263 is a binding site for ATP; that stretch reads RAE. Glu-284 is a binding site for L-serine. 348–351 contributes to the ATP binding site; that stretch reads EISS. Ser-383 contacts L-serine.

The protein belongs to the class-II aminoacyl-tRNA synthetase family. Type-1 seryl-tRNA synthetase subfamily. In terms of assembly, homodimer. The tRNA molecule binds across the dimer.

The protein resides in the cytoplasm. It carries out the reaction tRNA(Ser) + L-serine + ATP = L-seryl-tRNA(Ser) + AMP + diphosphate + H(+). The enzyme catalyses tRNA(Sec) + L-serine + ATP = L-seryl-tRNA(Sec) + AMP + diphosphate + H(+). It participates in aminoacyl-tRNA biosynthesis; selenocysteinyl-tRNA(Sec) biosynthesis; L-seryl-tRNA(Sec) from L-serine and tRNA(Sec): step 1/1. Functionally, catalyzes the attachment of serine to tRNA(Ser). Is also able to aminoacylate tRNA(Sec) with serine, to form the misacylated tRNA L-seryl-tRNA(Sec), which will be further converted into selenocysteinyl-tRNA(Sec). In Pelotomaculum thermopropionicum (strain DSM 13744 / JCM 10971 / SI), this protein is Serine--tRNA ligase.